Consider the following 57-residue polypeptide: uncharacterized protein (57 aa).

This is an uncharacterized protein from Homo sapiens (Human).